The primary structure comprises 623 residues: MFEKQYDVIVVGAGHAGSEAAAAAANMGSKTLLITMNLQNIAQMSCNPAMGGIAKGQIVREIDAMGGYSGIVSDTSAIQFKMLNKSKGPAMWSPRVQSDRMRFAEDWRLKLEGTPNLDFYQEMVAGLIIENDKVIGVRTSLGLEVFAKSVVCTNGTFLNGLIHIGDKQFGGGRAGERAATGITKDLIEVGFEAGRMKTGTPPRVDGRSLDYSKMTEQPGDDIPGKFSYSDETKPLSKQRSCHMTYTSNEVHDILKEGFDRSPMFNGRIQSIGPRYCPSIEDKINRFADKDRHQLFVEPEGWNTVEVYVNGFSTSLPEDVQFKALRSVAGFENVKFFRPGYAIEYDYFPPTQLKHTLETKLVEGLYFAGQINGTTGYEEAACQGMMAGINAALKVQEKDEFILKRNEAYIGVLIDDLITKGTEEPYRMFTSRAEYRTLLRQDNADFRLTERSYNLGLASEKRMRKMEEKKDKSLKFVQYLKDLSVVPEEANPVLEKRNSSPMKQSDKVFKVFSRPQITMEDVKNFSGVEEFISENELNEEMIEQTEIQVKYSGYIEKEKNNADKLNRLEDMKIPKNFDYSNIKSMSYEAREKLKKVQPATVSQASRISGVSPNDISVLLVYMGR.

12 to 17 contacts FAD; the sequence is GAGHAG. Residue 272–286 participates in NAD(+) binding; sequence GPRYCPSIEDKINRF.

The protein belongs to the MnmG family. As to quaternary structure, homodimer. Heterotetramer of two MnmE and two MnmG subunits. It depends on FAD as a cofactor.

Its subcellular location is the cytoplasm. In terms of biological role, NAD-binding protein involved in the addition of a carboxymethylaminomethyl (cmnm) group at the wobble position (U34) of certain tRNAs, forming tRNA-cmnm(5)s(2)U34. The chain is tRNA uridine 5-carboxymethylaminomethyl modification enzyme MnmG from Christiangramia forsetii (strain DSM 17595 / CGMCC 1.15422 / KT0803) (Gramella forsetii).